The primary structure comprises 343 residues: Protein phosphatase 2C homolog 7, mitochondrial (343 aa).

The N-terminal 39 residues, 1-39, are a transit peptide targeting the mitochondrion; the sequence is MFANVGFRTLRVSRGPLYGSCSQIISFSKRTFYSSAKSG. The region spanning 76-342 is the PPM-type phosphatase domain; sequence IYQKLKDSIR…DDITVVVVRV (267 aa). Residues aspartate 109, glycine 110, and aspartate 265 each contribute to the Mn(2+) site.

Mg(2+) is required as a cofactor. It depends on Mn(2+) as a cofactor.

It localises to the mitochondrion. It carries out the reaction O-phospho-L-seryl-[protein] + H2O = L-seryl-[protein] + phosphate. The enzyme catalyses O-phospho-L-threonyl-[protein] + H2O = L-threonyl-[protein] + phosphate. In terms of biological role, protein phosphatase which positively regulates biosynthesis of the ubiquinone, coenzyme Q. Dephosphorylates and activates the ubiquinone biosynthesis protein CAT5/COQ7. Also dephosphorylates CIT1 on 'Ser-462', which leads to its activation. The protein is Protein phosphatase 2C homolog 7, mitochondrial (PTC7) of Saccharomyces cerevisiae (strain ATCC 204508 / S288c) (Baker's yeast).